The sequence spans 456 residues: Taurine--pyruvate aminotransferase (456 aa).

Lys280 carries the N6-(pyridoxal phosphate)lysine modification.

Belongs to the class-III pyridoxal-phosphate-dependent aminotransferase family. Homotetramer. The cofactor is pyridoxal 5'-phosphate.

The catalysed reaction is taurine + pyruvate = sulfoacetaldehyde + L-alanine. It functions in the pathway organosulfur degradation; alkanesulfonate degradation. Functionally, involved in an anaerobic respiration pathway that converts the sulfonate taurine (2-aminoethanesulfonate) to ammonia, acetate and sulfide. Catalyzes the initial metabolic reaction of anaerobic taurine degradation, i.e. the transamination reaction between taurine and pyruvate leading to sulfoacetaldehyde and alanine. The protein is Taurine--pyruvate aminotransferase of Bilophila wadsworthia (strain 3_1_6).